We begin with the raw amino-acid sequence, 497 residues long: Probable cytosol aminopeptidase (497 aa).

Mn(2+)-binding residues include Lys-267 and Asp-272. Residue Lys-279 is part of the active site. Positions 290, 349, and 351 each coordinate Mn(2+). Arg-353 is an active-site residue.

Belongs to the peptidase M17 family. It depends on Mn(2+) as a cofactor.

The protein localises to the cytoplasm. The enzyme catalyses Release of an N-terminal amino acid, Xaa-|-Yaa-, in which Xaa is preferably Leu, but may be other amino acids including Pro although not Arg or Lys, and Yaa may be Pro. Amino acid amides and methyl esters are also readily hydrolyzed, but rates on arylamides are exceedingly low.. The catalysed reaction is Release of an N-terminal amino acid, preferentially leucine, but not glutamic or aspartic acids.. In terms of biological role, presumably involved in the processing and regular turnover of intracellular proteins. Catalyzes the removal of unsubstituted N-terminal amino acids from various peptides. The polypeptide is Probable cytosol aminopeptidase (Syntrophotalea carbinolica (strain DSM 2380 / NBRC 103641 / GraBd1) (Pelobacter carbinolicus)).